Here is a 1005-residue protein sequence, read N- to C-terminus: Probable beta-galactosidase A (1005 aa).

An N-terminal signal peptide occupies residues 1–18 (MKLLSVAAVALLAAQAAG). Residues tyrosine 96, asparagine 140, alanine 141, and glutamate 142 each coordinate substrate. The N-linked (GlcNAc...) asparagine glycan is linked to asparagine 156. Asparagine 199 serves as a coordination point for substrate. The active-site Proton donor is the glutamate 200. A disulfide bridge links cysteine 205 with cysteine 206. Tyrosine 260 lines the substrate pocket. The cysteines at positions 266 and 315 are disulfide-linked. Catalysis depends on glutamate 298, which acts as the Nucleophile. Tyrosine 364 contacts substrate. N-linked (GlcNAc...) asparagine glycosylation is found at asparagine 373, asparagine 402, asparagine 453, asparagine 478, asparagine 522, asparagine 622, asparagine 760, asparagine 777, asparagine 805, and asparagine 914.

This sequence belongs to the glycosyl hydrolase 35 family.

It is found in the secreted. The catalysed reaction is Hydrolysis of terminal non-reducing beta-D-galactose residues in beta-D-galactosides.. Cleaves beta-linked terminal galactosyl residues from gangliosides, glycoproteins, and glycosaminoglycans. The chain is Probable beta-galactosidase A (lacA) from Aspergillus flavus (strain ATCC 200026 / FGSC A1120 / IAM 13836 / NRRL 3357 / JCM 12722 / SRRC 167).